Consider the following 83-residue polypeptide: High-potential iron-sulfur protein (83 aa).

4 residues coordinate [4Fe-4S] cluster: cysteine 43, cysteine 46, cysteine 61, and cysteine 75.

This sequence belongs to the high-potential iron-sulfur protein (HiPIP) family. In terms of assembly, homodimer.

The protein resides in the periplasm. In terms of biological role, specific class of high-redox-potential 4Fe-4S ferredoxins. Functions in anaerobic electron transport in most purple and in some other photosynthetic bacteria and in at least one genus (Paracoccus) of halophilic, denitrifying bacteria. This is High-potential iron-sulfur protein (hip) from Marichromatium gracile (Chromatium gracile).